We begin with the raw amino-acid sequence, 180 residues long: GTP cyclohydrolase 1 (180 aa).

3 residues coordinate Zn(2+): C71, H74, and C142.

The protein belongs to the GTP cyclohydrolase I family. As to quaternary structure, homomer.

It carries out the reaction GTP + H2O = 7,8-dihydroneopterin 3'-triphosphate + formate + H(+). Its pathway is cofactor biosynthesis; 7,8-dihydroneopterin triphosphate biosynthesis; 7,8-dihydroneopterin triphosphate from GTP: step 1/1. The sequence is that of GTP cyclohydrolase 1 from Helicobacter pylori (strain Shi470).